A 393-amino-acid polypeptide reads, in one-letter code: Ornithine decarboxylase 2 (393 aa).

The residue at position 62 (Lys62) is an N6-(pyridoxal phosphate)lysine. Residues Ser194, Gly231, and Glu265 to Arg268 each bind pyridoxal 5'-phosphate. Tyr314–Tyr315 serves as a coordination point for substrate. Cys343 functions as the Proton donor; shared with dimeric partner in the catalytic mechanism. Asp344 is a binding site for substrate. A pyridoxal 5'-phosphate-binding site is contributed by Tyr371.

Belongs to the Orn/Lys/Arg decarboxylase class-II family. Homodimer. Only the dimer is catalytically active, as the active sites are constructed of residues from both monomers. The cofactor is pyridoxal 5'-phosphate.

The catalysed reaction is L-ornithine + H(+) = putrescine + CO2. Its pathway is amine and polyamine biosynthesis; putrescine biosynthesis via L-ornithine pathway; putrescine from L-ornithine: step 1/1. With respect to regulation, inhibited by antizyme (AZ) in response to polyamine levels. AZ inhibits the assembly of the functional homodimer by binding to ODC monomers and targeting them for ubiquitin-independent proteolytic destruction by the 26S proteasome. Its function is as follows. Catalyzes the first and rate-limiting step of polyamine biosynthesis that converts ornithine into putrescine, which is the precursor for the polyamines, spermidine and spermine. Polyamines are essential for cell proliferation and are implicated in cellular processes, ranging from DNA replication to apoptosis. The chain is Ornithine decarboxylase 2 (Odc2) from Drosophila melanogaster (Fruit fly).